The sequence spans 658 residues: Probable methyl-accepting chemotaxis protein BT9727_0469 (658 aa).

Residues methionine 1 to lysine 14 lie on the Cytoplasmic side of the membrane. A helical transmembrane segment spans residues leucine 15–tyrosine 35. Topologically, residues glutamine 36–threonine 283 are extracellular. Residues glutamate 44–isoleucine 109 are a coiled coil. In terms of domain architecture, Cache spans isoleucine 150–lysine 221. Residues valine 284 to isoleucine 304 traverse the membrane as a helical segment. Positions alanine 301–serine 353 constitute an HAMP domain. The Cytoplasmic segment spans residues serine 305–valine 658. Glutamate methyl ester (Glu) is present on glutamate 368. The Methyl-accepting transducer domain maps to serine 372–alanine 622. Residue glutamine 592 is modified to Deamidated glutamine. Glutamine 592 carries the glutamate methyl ester (Gln) modification. Glutamate 627 and glutamate 634 each carry glutamate methyl ester (Glu).

It belongs to the methyl-accepting chemotaxis (MCP) protein family.

The protein localises to the cell membrane. Chemotactic-signal transducers respond to changes in the concentration of attractants and repellents in the environment, transduce a signal from the outside to the inside of the cell, and facilitate sensory adaptation through the variation of the level of methylation. In Bacillus thuringiensis subsp. konkukian (strain 97-27), this protein is Probable methyl-accepting chemotaxis protein BT9727_0469.